The following is a 425-amino-acid chain: Polyadenylate-binding protein RBP47B' (425 aa).

RRM domains follow at residues 24–102 (RTLW…LNWA), 116–195 (HSIF…AATP), and 237–309 (TTIS…WSKN).

This sequence belongs to the polyadenylate-binding RBP47 family. In terms of assembly, interacts with the poly(A) tail of mRNA in nucleus.

It localises to the nucleus. The protein localises to the cytoplasmic granule. Heterogeneous nuclear ribonucleoprotein (hnRNP)-protein binding the poly(A) tail of mRNA and probably involved in some steps of pre-mRNA maturation. The polypeptide is Polyadenylate-binding protein RBP47B' (RBP47B') (Arabidopsis thaliana (Mouse-ear cress)).